The following is a 552-amino-acid chain: MAGUK p55 subfamily member 2 (552 aa).

L27 domains follow at residues 8-59 (SESA…EETK) and 60-118 (LEAV…YETP). A Phosphoserine modification is found at serine 42. Threonine 117 carries the post-translational modification Phosphothreonine. Phosphoserine is present on serine 121. Positions 140–219 (MVGIRKTAGE…SVILKILPSY (80 aa)) constitute a PDZ domain. One can recognise an SH3 domain in the interval 225–293 (PRQVFVKCHF…PSQLLEEKRK (69 aa)). The 188-residue stretch at 350-537 (RKTLVLIGAQ…TFRELQTAME (188 aa)) folds into the Guanylate kinase-like domain.

The protein belongs to the MAGUK family. Can homomultimerise. Interacts with CACNG2. Interacts (via the SH3-Guanylate kinase-like sub-module) with DLG4/PSD95 and DLGAP1/GKAP. Interacts (via the PDZ domain) with CADM1 (via C-terminus). Interacts with KCNN2/SK2 (via N-terminal domain). Interacts with SRC. In terms of processing, phosphorylated by SRC. As to expression, expressed in hippocampal neurons.

Its subcellular location is the cell projection. It is found in the dendrite. The protein localises to the postsynaptic density. The protein resides in the cytoplasm. It localises to the cytoskeleton. Its subcellular location is the membrane. In terms of biological role, postsynaptic MAGUK scaffold protein that links CADM1 cell adhesion molecules to core components of the postsynaptic density. In CA1 pyramidal neurons, required for synaptic KCNN2-containing channel function and long-term potentiation expression. Seems to negatively regulate SRC function in epithelial cells. The chain is MAGUK p55 subfamily member 2 from Rattus norvegicus (Rat).